The primary structure comprises 312 residues: Cytochrome f (312 aa).

The N-terminal stretch at 1 to 30 (MYLSKNFFLNLKTFIFSFFVLCFFSQSAQA) is a signal peptide. The heme site is built by tyrosine 31, cysteine 51, cysteine 54, and histidine 55. Residues 278-298 (VQGLLLFSLFILLAQIFLVLK) form a helical membrane-spanning segment.

It belongs to the cytochrome f family. The 4 large subunits of the cytochrome b6-f complex are cytochrome b6, subunit IV (17 kDa polypeptide, petD), cytochrome f and the Rieske protein, while the 4 small subunits are PetG, PetL, PetM and PetN. The complex functions as a dimer. The cofactor is heme.

It is found in the plastid. The protein resides in the chloroplast thylakoid membrane. Its function is as follows. Component of the cytochrome b6-f complex, which mediates electron transfer between photosystem II (PSII) and photosystem I (PSI), cyclic electron flow around PSI, and state transitions. This Bigelowiella natans (Pedinomonas minutissima) protein is Cytochrome f (petA).